Reading from the N-terminus, the 405-residue chain is Enoyl-[acyl-carrier-protein] reductase [NADH] (405 aa).

NAD(+) is bound by residues 51 to 56 (GASSGY), 77 to 78 (FE), 114 to 115 (DA), and 142 to 143 (LA). Position 228 (Y228) interacts with substrate. The active-site Proton donor is the Y238. NAD(+)-binding positions include K247 and 276-278 (VVT).

It belongs to the TER reductase family. Monomer.

The enzyme catalyses a 2,3-saturated acyl-[ACP] + NAD(+) = a (2E)-enoyl-[ACP] + NADH + H(+). It functions in the pathway lipid metabolism; fatty acid biosynthesis. In terms of biological role, involved in the final reduction of the elongation cycle of fatty acid synthesis (FAS II). Catalyzes the reduction of a carbon-carbon double bond in an enoyl moiety that is covalently linked to an acyl carrier protein (ACP). The polypeptide is Enoyl-[acyl-carrier-protein] reductase [NADH] (Chromohalobacter salexigens (strain ATCC BAA-138 / DSM 3043 / CIP 106854 / NCIMB 13768 / 1H11)).